The chain runs to 90 residues: Large ribosomal subunit protein eL37 (90 aa).

An A20-type zinc finger spans residues 13–46 (NKSHTLCNRCGRRSFHVQKKTCSSCGYPAAKMRS). Zn(2+) is bound by residues Cys-19, Cys-22, Cys-34, and Cys-37.

The protein belongs to the eukaryotic ribosomal protein eL37 family. Component of the large ribosomal subunit. Mature ribosomes consist of a small (40S) and a large (60S) subunit. The 40S subunit contains about 32 different proteins and 1 molecule of RNA (18S). The 60S subunit contains 45 different proteins and 3 molecules of RNA (25S, 5.8S and 5S). The cofactor is Zn(2+).

It localises to the cytoplasm. Its function is as follows. Component of the ribosome, a large ribonucleoprotein complex responsible for the synthesis of proteins in the cell. The small ribosomal subunit (SSU) binds messenger RNAs (mRNAs) and translates the encoded message by selecting cognate aminoacyl-transfer RNA (tRNA) molecules. The large subunit (LSU) contains the ribosomal catalytic site termed the peptidyl transferase center (PTC), which catalyzes the formation of peptide bonds, thereby polymerizing the amino acids delivered by tRNAs into a polypeptide chain. The nascent polypeptides leave the ribosome through a tunnel in the LSU and interact with protein factors that function in enzymatic processing, targeting, and the membrane insertion of nascent chains at the exit of the ribosomal tunnel. This is Large ribosomal subunit protein eL37 from Candida albicans (strain SC5314 / ATCC MYA-2876) (Yeast).